The chain runs to 719 residues: Polyphosphate kinase (719 aa).

Residue asparagine 54 participates in ATP binding. Residues arginine 379 and arginine 409 each coordinate Mg(2+). One can recognise a PLD phosphodiesterase domain in the interval 434–468 (THLKTHSKIALVVKRMNNKLTSFIHLGTGNYNDKT). Histidine 439 serves as the catalytic Phosphohistidine intermediate. Tyrosine 472, arginine 568, and histidine 596 together coordinate ATP.

It belongs to the polyphosphate kinase 1 (PPK1) family. It depends on Mg(2+) as a cofactor. An intermediate of this reaction is the autophosphorylated ppk in which a phosphate is covalently linked to a histidine residue through a N-P bond.

It catalyses the reaction [phosphate](n) + ATP = [phosphate](n+1) + ADP. Functionally, catalyzes the reversible transfer of the terminal phosphate of ATP to form a long-chain polyphosphate (polyP). This chain is Polyphosphate kinase, found in Staphylococcus saprophyticus subsp. saprophyticus (strain ATCC 15305 / DSM 20229 / NCIMB 8711 / NCTC 7292 / S-41).